The chain runs to 246 residues: tRNA pseudouridine synthase A (246 aa).

Asp52 functions as the Nucleophile in the catalytic mechanism. Tyr111 contributes to the substrate binding site.

It belongs to the tRNA pseudouridine synthase TruA family. As to quaternary structure, homodimer.

The enzyme catalyses uridine(38/39/40) in tRNA = pseudouridine(38/39/40) in tRNA. In terms of biological role, formation of pseudouridine at positions 38, 39 and 40 in the anticodon stem and loop of transfer RNAs. This Parvibaculum lavamentivorans (strain DS-1 / DSM 13023 / NCIMB 13966) protein is tRNA pseudouridine synthase A.